We begin with the raw amino-acid sequence, 316 residues long: ATP synthase gamma chain (316 aa).

Belongs to the ATPase gamma chain family. F-type ATPases have 2 components, CF(1) - the catalytic core - and CF(0) - the membrane proton channel. CF(1) has five subunits: alpha(3), beta(3), gamma(1), delta(1), epsilon(1). CF(0) has three main subunits: a, b and c.

The protein resides in the cellular thylakoid membrane. Functionally, produces ATP from ADP in the presence of a proton gradient across the membrane. The gamma chain is believed to be important in regulating ATPase activity and the flow of protons through the CF(0) complex. The chain is ATP synthase gamma chain from Synechococcus sp. (strain CC9605).